The sequence spans 681 residues: DNA-directed RNA polymerase subunit beta' (681 aa).

Zn(2+)-binding residues include Cys-69, Cys-71, Cys-87, and Cys-90. Positions 489, 491, and 493 each coordinate Mg(2+).

This sequence belongs to the RNA polymerase beta' chain family. RpoC1 subfamily. In terms of assembly, in plastids the minimal PEP RNA polymerase catalytic core is composed of four subunits: alpha, beta, beta', and beta''. When a (nuclear-encoded) sigma factor is associated with the core the holoenzyme is formed, which can initiate transcription. The cofactor is Mg(2+). Zn(2+) serves as cofactor.

The protein localises to the plastid. It is found in the chloroplast. It carries out the reaction RNA(n) + a ribonucleoside 5'-triphosphate = RNA(n+1) + diphosphate. In terms of biological role, DNA-dependent RNA polymerase catalyzes the transcription of DNA into RNA using the four ribonucleoside triphosphates as substrates. This chain is DNA-directed RNA polymerase subunit beta', found in Cycas taitungensis (Prince sago).